The primary structure comprises 86 residues: RNA-binding protein Hfq (86 aa).

Residues 9-68 (DPYLNTLRKEKVPVSIYLVNGIKLQGSIESFDQFVVLLKNTVSQMVYKHAISTVVPARPV) enclose the Sm domain. Residues 66 to 86 (RPVRLPSPTDSEHGDSEPGNA) form a disordered region. Basic and acidic residues predominate over residues 75-86 (DSEHGDSEPGNA).

It belongs to the Hfq family. Homohexamer.

RNA chaperone that binds small regulatory RNA (sRNAs) and mRNAs to facilitate mRNA translational regulation in response to envelope stress, environmental stress and changes in metabolite concentrations. Also binds with high specificity to tRNAs. This is RNA-binding protein Hfq from Pseudomonas putida (strain ATCC 700007 / DSM 6899 / JCM 31910 / BCRC 17059 / LMG 24140 / F1).